A 1601-amino-acid polypeptide reads, in one-letter code: Rap guanine nucleotide exchange factor 6 (1601 aa).

Residue M1 is modified to N-acetylmethionine. 2 disordered regions span residues 1–22 (MNSPVDPGARQALRKKPPERTP) and 179–250 (PHPQ…QGRD). Residue S3 is modified to Phosphoserine. A compositionally biased stretch (low complexity) spans 187–205 (SSSQSGCSIASDSGSSSLS). A compositionally biased stretch (acidic residues) spans 228 to 241 (VDSEDDEEEDEEID). 280-399 (AFANMTMSVR…VEEEGEIVMV (120 aa)) lines the a nucleoside 3',5'-cyclic phosphate pocket. The region spanning 412–526 (KGHIVIKATP…LLNIACAAKA (115 aa)) is the N-terminal Ras-GEF domain. A PDZ domain is found at 530–615 (QVVLQKASRE…LTVKTNIFVF (86 aa)). Residues 749 to 835 (PDQVIRVFKV…GRYYLKNNME (87 aa)) enclose the Ras-associating domain. In terms of domain architecture, Ras-GEF spans 860–1088 (STIEVATQLS…LDVQGGAHKK (229 aa)). Disordered regions lie at residues 1192 to 1274 (IRKK…SRSS), 1302 to 1324 (ESTGALEKTEHASGIGDHSQHGP), 1455 to 1478 (LESTPAESSEGLDPKDATDPVYKT), and 1571 to 1601 (QRHNLQPFHPKLGDVTDADSEADENEQVSAV). 2 stretches are compositionally biased toward low complexity: residues 1229 to 1238 (SVASSLHSSP) and 1255 to 1274 (SAKSDNLSDSSHSEISSRSS). Acidic residues predominate over residues 1586 to 1601 (TDADSEADENEQVSAV).

Interacts with the second PDZ domain of human PTP1e. As to expression, isoform 3 has highest expression levels in the brain, heart, liver, lung and placenta and is barely detectable in skeletal muscle, kidney and pancreas.

It localises to the cytoplasm. The protein localises to the cell membrane. In terms of biological role, guanine nucleotide exchange factor (GEF) for Rap1A, Rap2A and M-Ras GTPases. Does not interact with cAMP. The sequence is that of Rap guanine nucleotide exchange factor 6 (RAPGEF6) from Homo sapiens (Human).